The chain runs to 118 residues: DNA-binding protein MmarC5_1518 (118 aa).

Basic and acidic residues predominate over residues 1-12 (MNPEEIRQRRLQ). The segment at 1–35 (MNPEEIRQRRLQEMQAKAQEQGAEDPEAQRQAQEQ) is disordered.

Belongs to the PDCD5 family.

This Methanococcus maripaludis (strain C5 / ATCC BAA-1333) protein is DNA-binding protein MmarC5_1518.